A 318-amino-acid chain; its full sequence is Porphobilinogen deaminase (318 aa).

S-(dipyrrolylmethanemethyl)cysteine is present on cysteine 248.

The protein belongs to the HMBS family. As to quaternary structure, monomer. Dipyrromethane serves as cofactor.

The enzyme catalyses 4 porphobilinogen + H2O = hydroxymethylbilane + 4 NH4(+). It functions in the pathway porphyrin-containing compound metabolism; protoporphyrin-IX biosynthesis; coproporphyrinogen-III from 5-aminolevulinate: step 2/4. Functionally, tetrapolymerization of the monopyrrole PBG into the hydroxymethylbilane pre-uroporphyrinogen in several discrete steps. This Caulobacter sp. (strain K31) protein is Porphobilinogen deaminase.